Consider the following 325-residue polypeptide: Diacylglycerol acyltransferase/mycolyltransferase Ag85B (325 aa).

The first 40 residues, 1 to 40, serve as a signal peptide directing secretion; it reads MTDVSRKIRAWGRRLMIGTAAAVVLPGLVGLAGGAATAGA. 82-83 provides a ligand contact to substrate; the sequence is LR. The segment at 98–108 is fibronectin-binding; that stretch reads FEWYYQSGLSI. The cysteines at positions 127 and 132 are disulfide-linked. Residues S166 and D194 each coordinate substrate. Residue S166 is the Nucleophile of the active site. The active site involves E270. Residues 272 to 275, K279, and 302 to 304 each bind substrate; these read FVRS and HSW. The active site involves H302.

The protein belongs to the mycobacterial A85 antigen family.

The protein localises to the secreted. The catalysed reaction is 2 alpha,alpha'-trehalose 6-mycolate = alpha,alpha'-trehalose 6,6'-bismycolate + alpha,alpha-trehalose. It carries out the reaction an acyl-CoA + a 1,2-diacyl-sn-glycerol = a triacyl-sn-glycerol + CoA. In terms of biological role, the antigen 85 proteins (FbpA, FbpB, FbpC) are responsible for the high affinity of mycobacteria for fibronectin, a large adhesive glycoprotein, which facilitates the attachment of M.tuberculosis to murine alveolar macrophages (AMs). They also help to maintain the integrity of the cell wall by catalyzing the transfer of mycolic acids to cell wall arabinogalactan and through the synthesis of alpha,alpha-trehalose dimycolate (TDM, cord factor). They catalyze the transfer of a mycoloyl residue from one molecule of alpha,alpha-trehalose monomycolate (TMM) to another TMM, leading to the formation of TDM. The sequence is that of Diacylglycerol acyltransferase/mycolyltransferase Ag85B (fbpB) from Mycobacterium tuberculosis (strain ATCC 25177 / H37Ra).